The following is a 327-amino-acid chain: Mitochondrial coenzyme A transporter SLC25A42 (327 aa).

3 Solcar repeats span residues 34-120 (KSIL…YKKL), 132-217 (LTPI…LKKL), and 227-315 (PYPF…TQIL). The next 6 membrane-spanning stretches (helical) occupy residues 36–56 (ILNSLMSGALAGAVAKTAVAP), 92–112 (LWRGNSATMVRVIPYAAIQFC), 138–158 (LLAGALAGTTATIITYPLDLV), 189–209 (LYRGFTPTVLGVIPYAGISFF), 233–253 (LLFGACAGLFGQSASYPLDVV), and 296–316 (VKGPVAVGISFTTFDLTQILL).

Belongs to the mitochondrial carrier (TC 2.A.29) family.

It localises to the mitochondrion inner membrane. It catalyses the reaction ADP(out) + CoA(in) = ADP(in) + CoA(out). The catalysed reaction is 3'-dephospho-CoA(in) + ADP(out) = 3'-dephospho-CoA(out) + ADP(in). The enzyme catalyses adenosine 3',5'-bisphosphate(in) + ADP(out) = adenosine 3',5'-bisphosphate(out) + ADP(in). It carries out the reaction AMP(in) + ADP(out) = AMP(out) + ADP(in). It catalyses the reaction dADP(in) + ADP(out) = dADP(out) + ADP(in). The catalysed reaction is ADP(in) + ATP(out) = ADP(out) + ATP(in). In terms of biological role, mitochondrial carrier mediating the transport of coenzyme A (CoA) in mitochondria in exchange for intramitochondrial (deoxy)adenine nucleotides and adenosine 3',5'-diphosphate. This Xenopus tropicalis (Western clawed frog) protein is Mitochondrial coenzyme A transporter SLC25A42 (slc25a42).